We begin with the raw amino-acid sequence, 130 residues long: ATP synthase epsilon chain (130 aa).

Belongs to the ATPase epsilon chain family. F-type ATPases have 2 components, CF(1) - the catalytic core - and CF(0) - the membrane proton channel. CF(1) has five subunits: alpha(3), beta(3), gamma(1), delta(1), epsilon(1). CF(0) has three main subunits: a, b and c.

The protein resides in the cell inner membrane. Produces ATP from ADP in the presence of a proton gradient across the membrane. The sequence is that of ATP synthase epsilon chain from Sulfurimonas denitrificans (strain ATCC 33889 / DSM 1251) (Thiomicrospira denitrificans (strain ATCC 33889 / DSM 1251)).